The primary structure comprises 321 residues: Glucokinase (321 aa).

8–13 (GDVGGT) serves as a coordination point for ATP.

It belongs to the bacterial glucokinase family.

It is found in the cytoplasm. It carries out the reaction D-glucose + ATP = D-glucose 6-phosphate + ADP + H(+). In Tolumonas auensis (strain DSM 9187 / NBRC 110442 / TA 4), this protein is Glucokinase.